The chain runs to 340 residues: Deubiquitinase SseL (340 aa).

H223 is an active-site residue. Residue C285 is the Nucleophile of the active site.

This sequence belongs to the peptidase C79 family.

The protein resides in the secreted. It is found in the host cytoplasm. Its function is as follows. Effector proteins function to alter host cell physiology and promote bacterial survival in host tissues. This protease targets the host cell ubiquitin pathway by acting as a deubiquitinase in infected host cells. Specifically hydrolyzes mono- and polyubiquitin substrates in vitro with a preference for 'Lys-63'-linked ubiquitin chains, suggesting that it interferes with a signaling pathway rather than inhibiting proteasomal-dependent degradation of its targets. Does not possess desumoylating activity. Is required for the Salmonella-induced delayed cytotoxicity in macrophages and full virulence. Is not required for intracellular bacterial replication. This Salmonella typhimurium (strain LT2 / SGSC1412 / ATCC 700720) protein is Deubiquitinase SseL (sseL).